Reading from the N-terminus, the 234-residue chain is MKDQKVIVALDYDRQADALAFVDKIDPSSCRLKVGKEMFTLFGPEFVKELHKRGFSVFLDLKFHDIPNTCSKAVRAAAEMGVWMVNVHASGGERMMTASREILEPYGKDRPLLIGVTVLTSMEQQDLAGIGLDIAPQEQVKRLAALTKNSGLDGVVCSAQEASMLKADLGKYFKLVTPGIRPVGSDVGDQKRIMTPVDAIISGSDYLVIGRPITQAENPSQVLNDINLSLAPVL.

Substrate is bound by residues D11, K33, 60–69 (DLKFHDIPNT), T120, R181, Q190, G210, and R211. K62 (proton donor) is an active-site residue.

This sequence belongs to the OMP decarboxylase family. Type 1 subfamily. Homodimer.

It carries out the reaction orotidine 5'-phosphate + H(+) = UMP + CO2. It participates in pyrimidine metabolism; UMP biosynthesis via de novo pathway; UMP from orotate: step 2/2. In terms of biological role, catalyzes the decarboxylation of orotidine 5'-monophosphate (OMP) to uridine 5'-monophosphate (UMP). The protein is Orotidine 5'-phosphate decarboxylase of Aliivibrio salmonicida (strain LFI1238) (Vibrio salmonicida (strain LFI1238)).